We begin with the raw amino-acid sequence, 137 residues long: Large ribosomal subunit protein uL16 (137 aa).

The protein belongs to the universal ribosomal protein uL16 family. Part of the 50S ribosomal subunit.

Binds 23S rRNA and is also seen to make contacts with the A and possibly P site tRNAs. This Rhizobium johnstonii (strain DSM 114642 / LMG 32736 / 3841) (Rhizobium leguminosarum bv. viciae) protein is Large ribosomal subunit protein uL16.